Here is a 133-residue protein sequence, read N- to C-terminus: Basic phospholipase A2 beta-bungarotoxin A-AL2 chain (133 aa).

A signal peptide spans 1 to 5; that stretch reads FLLGA. A propeptide spanning residues 6–13 is cleaved from the precursor; it reads ANIPPHPL. Intrachain disulfides connect C40-C132, C42-C58, C57-C113, C64-C106, C74-C99, and C92-C104. Positions 41, 43, and 45 each coordinate Ca(2+). The active site involves H61. D62 contributes to the Ca(2+) binding site. The active site involves D107.

This sequence belongs to the phospholipase A2 family. Group I subfamily. D49 sub-subfamily. Heterodimer; disulfide-linked. The A chains have phospholipase A2 activity and the B chains show homology with the basic protease inhibitors. Ca(2+) is required as a cofactor. As to expression, expressed by the venom gland.

The protein resides in the secreted. The enzyme catalyses a 1,2-diacyl-sn-glycero-3-phosphocholine + H2O = a 1-acyl-sn-glycero-3-phosphocholine + a fatty acid + H(+). Snake venom phospholipase A2 (PLA2) that inhibits neuromuscular transmission by blocking acetylcholine release from the nerve termini. PLA2 catalyzes the calcium-dependent hydrolysis of the 2-acyl groups in 3-sn-phosphoglycerides. In Bungarus multicinctus (Many-banded krait), this protein is Basic phospholipase A2 beta-bungarotoxin A-AL2 chain.